We begin with the raw amino-acid sequence, 366 residues long: Hydroxyproline O-arabinosyltransferase 1 (366 aa).

The helical; Signal-anchor transmembrane segment at 6-26 (TLFYPLLITLSVALITYNIII) threads the bilayer.

As to expression, ubiquitous.

The protein resides in the golgi apparatus. It is found in the cis-Golgi network membrane. The catalysed reaction is trans-4-hydroxy-L-prolyl-[protein] + UDP-beta-L-arabinofuranose = O-(beta-L-arabinofuranosyl)-trans-4-hydroxy-L-prolyl-[protein] + UDP + H(+). Functionally, glycosyltransferase involved in the O-arabinosylation of several proteins including extensins and small signaling peptides. Catalyzes the transfer of the initial L-arabinose to the hydroxyl group of Hyp residues. Contributes redundantly with HPAT2 and HPAT3 to arabinosylation of EXT3. The polypeptide is Hydroxyproline O-arabinosyltransferase 1 (Arabidopsis thaliana (Mouse-ear cress)).